The following is a 198-amino-acid chain: Na(+)-translocating NADH-quinone reductase subunit E (198 aa).

6 helical membrane passes run 11–31 (AVFV…FLAV), 35–55 (VSTA…SVPA), 77–97 (FLNF…LEMI), 109–129 (LGIF…VSFM), 140–160 (IVYG…LAGI), and 176–196 (LGIT…FAGV).

The protein belongs to the NqrDE/RnfAE family. Composed of six subunits; NqrA, NqrB, NqrC, NqrD, NqrE and NqrF.

The protein resides in the cell inner membrane. It catalyses the reaction a ubiquinone + n Na(+)(in) + NADH + H(+) = a ubiquinol + n Na(+)(out) + NAD(+). Functionally, NQR complex catalyzes the reduction of ubiquinone-1 to ubiquinol by two successive reactions, coupled with the transport of Na(+) ions from the cytoplasm to the periplasm. NqrA to NqrE are probably involved in the second step, the conversion of ubisemiquinone to ubiquinol. The polypeptide is Na(+)-translocating NADH-quinone reductase subunit E (Yersinia pestis bv. Antiqua (strain Nepal516)).